Reading from the N-terminus, the 273-residue chain is Formamidopyrimidine-DNA glycosylase (273 aa).

P2 acts as the Schiff-base intermediate with DNA in catalysis. The Proton donor role is filled by E3. The active-site Proton donor; for beta-elimination activity is the K59. 2 residues coordinate DNA: H92 and R111. An FPG-type zinc finger spans residues 239 to 273; that stretch reads KVYGKTGEPCVICGTPIEKIKLNGRGTHFCPHCQK. The active-site Proton donor; for delta-elimination activity is R263.

The protein belongs to the FPG family. In terms of assembly, monomer. Zn(2+) is required as a cofactor.

It carries out the reaction Hydrolysis of DNA containing ring-opened 7-methylguanine residues, releasing 2,6-diamino-4-hydroxy-5-(N-methyl)formamidopyrimidine.. The catalysed reaction is 2'-deoxyribonucleotide-(2'-deoxyribose 5'-phosphate)-2'-deoxyribonucleotide-DNA = a 3'-end 2'-deoxyribonucleotide-(2,3-dehydro-2,3-deoxyribose 5'-phosphate)-DNA + a 5'-end 5'-phospho-2'-deoxyribonucleoside-DNA + H(+). In terms of biological role, involved in base excision repair of DNA damaged by oxidation or by mutagenic agents. Acts as a DNA glycosylase that recognizes and removes damaged bases. Has a preference for oxidized purines, such as 7,8-dihydro-8-oxoguanine (8-oxoG). Has AP (apurinic/apyrimidinic) lyase activity and introduces nicks in the DNA strand. Cleaves the DNA backbone by beta-delta elimination to generate a single-strand break at the site of the removed base with both 3'- and 5'-phosphates. This chain is Formamidopyrimidine-DNA glycosylase, found in Listeria innocua serovar 6a (strain ATCC BAA-680 / CLIP 11262).